Here is a 321-residue protein sequence, read N- to C-terminus: Beta-ketoacyl-[acyl-carrier-protein] synthase III (321 aa).

Residues Cys116 and His248 contribute to the active site. The ACP-binding stretch occupies residues 249–253; sequence QANLR. Residue Asn278 is part of the active site.

Belongs to the thiolase-like superfamily. FabH family. Homodimer.

Its subcellular location is the cytoplasm. The enzyme catalyses malonyl-[ACP] + acetyl-CoA + H(+) = 3-oxobutanoyl-[ACP] + CO2 + CoA. It participates in lipid metabolism; fatty acid biosynthesis. In terms of biological role, catalyzes the condensation reaction of fatty acid synthesis by the addition to an acyl acceptor of two carbons from malonyl-ACP. Catalyzes the first condensation reaction which initiates fatty acid synthesis and may therefore play a role in governing the total rate of fatty acid production. Possesses both acetoacetyl-ACP synthase and acetyl transacylase activities. Its substrate specificity determines the biosynthesis of branched-chain and/or straight-chain of fatty acids. In Yersinia enterocolitica serotype O:8 / biotype 1B (strain NCTC 13174 / 8081), this protein is Beta-ketoacyl-[acyl-carrier-protein] synthase III.